We begin with the raw amino-acid sequence, 549 residues long: Endoplasmic reticulum mannosyl-oligosaccharide 1,2-alpha-mannosidase (549 aa).

Topologically, residues 1-4 (MKNS) are cytoplasmic. The helical; Signal-anchor for type II membrane protein transmembrane segment at 5 to 24 (VGISIATIVAIIAAIYYVPW) threads the bilayer. The Lumenal segment spans residues 25–354 (YEHFERKSPG…LLASGSTEGL (330 aa)). Residues Asn96, Asn155, and Asn224 are each glycosylated (N-linked (GlcNAc...) asparagine). Residues Cys340 and Cys385 are joined by a disulfide bond. The Proton donor role is filled by Glu399. Cys468 and Cys471 are oxidised to a cystine. A Ca(2+)-binding site is contributed by Thr525.

It belongs to the glycosyl hydrolase 47 family. In terms of assembly, homodimer. Requires Ca(2+) as cofactor.

Its subcellular location is the endoplasmic reticulum membrane. It catalyses the reaction N(4)-(alpha-D-Man-(1-&gt;2)-alpha-D-Man-(1-&gt;2)-alpha-D-Man-(1-&gt;3)-[alpha-D-Man-(1-&gt;2)-alpha-D-Man-(1-&gt;3)-[alpha-D-Man-(1-&gt;2)-alpha-D-Man-(1-&gt;6)]-alpha-D-Man-(1-&gt;6)]-beta-D-Man-(1-&gt;4)-beta-D-GlcNAc-(1-&gt;4)-beta-D-GlcNAc)-L-asparaginyl-[protein] (N-glucan mannose isomer 9A1,2,3B1,2,3) + 4 H2O = N(4)-(alpha-D-Man-(1-&gt;3)-[alpha-D-Man-(1-&gt;3)-[alpha-D-Man-(1-&gt;6)]-alpha-D-Man-(1-&gt;6)]-beta-D-Man-(1-&gt;4)-beta-D-GlcNAc-(1-&gt;4)-beta-D-GlcNAc)-L-asparaginyl-[protein] (N-glucan mannose isomer 5A1,2) + 4 beta-D-mannose. It carries out the reaction N(4)-(alpha-D-Man-(1-&gt;2)-alpha-D-Man-(1-&gt;2)-alpha-D-Man-(1-&gt;3)-[alpha-D-Man-(1-&gt;3)-[alpha-D-Man-(1-&gt;2)-alpha-D-Man-(1-&gt;6)]-alpha-D-Man-(1-&gt;6)]-beta-D-Man-(1-&gt;4)-beta-D-GlcNAc-(1-&gt;4)-beta-D-GlcNAc)-L-asparaginyl-[protein] (N-glucan mannose isomer 8A1,2,3B1,3) + 3 H2O = N(4)-(alpha-D-Man-(1-&gt;3)-[alpha-D-Man-(1-&gt;3)-[alpha-D-Man-(1-&gt;6)]-alpha-D-Man-(1-&gt;6)]-beta-D-Man-(1-&gt;4)-beta-D-GlcNAc-(1-&gt;4)-beta-D-GlcNAc)-L-asparaginyl-[protein] (N-glucan mannose isomer 5A1,2) + 3 beta-D-mannose. It participates in protein modification; protein glycosylation. Involved in glycoprotein quality control as it is important for the targeting of misfolded glycoproteins for degradation. It primarily trims a single alpha-1,2-linked mannose residue from Man(9)GlcNAc(2) to produce Man(8)GlcNAc(2), but at high enzyme concentrations it further trims the carbohydrates to Man(5)GlcNAc(2). The polypeptide is Endoplasmic reticulum mannosyl-oligosaccharide 1,2-alpha-mannosidase (MNS1) (Saccharomyces cerevisiae (strain ATCC 204508 / S288c) (Baker's yeast)).